The sequence spans 490 residues: Auxin transporter-like protein 5 (490 aa).

The Cytoplasmic portion of the chain corresponds to 1 to 55 (MEMANDKVAETVIVGNYVEMESEGKPPQDIKSKLSNFLWHGGSAYDAWFSCASNQ). A helical transmembrane segment spans residues 56-73 (VAQVLLTLPYSFSQLGML). The Extracellular portion of the chain corresponds to 74–75 (SG). The chain crosses the membrane as a helical span at residues 76 to 96 (ILFQLFYGILGSWTAYLISIL). Over 97–132 (YVEYRTRKEREKVNFRSHVIQWFEVLDGLLGKHWRN) the chain is Cytoplasmic. A helical membrane pass occupies residues 133–153 (VGLGFNCTFLLFGSVIQLIAC). Over 154–168 (ASNIYYINDNLDKRT) the chain is Extracellular. The chain crosses the membrane as a helical span at residues 169-189 (WTYIFGACCATTVFIPSFHNY). Arg-190 is a topological domain (cytoplasmic). Residues 191–211 (IWSFLGLVMTTYTAWYLTIAA) traverse the membrane as a helical segment. Over 212 to 227 (VLHGQVEGVKHSGPNK) the chain is Extracellular. A helical transmembrane segment spans residues 228-248 (IILYFTGATNILYTFGGHAVT). Over 249-262 (VEIMHAMWKPQKFK) the chain is Cytoplasmic. Residues 263 to 283 (AIYLLATLYVLTLTIPSATAV) traverse the membrane as a helical segment. Residues 284–310 (YWAFGDMLLNHSNAFALLPKSPFRDMA) lie on the Extracellular side of the membrane. Asn-293 carries N-linked (GlcNAc...) asparagine glycosylation. A helical transmembrane segment spans residues 311–331 (VILMLIHQFITFGFACTPLYF). Residues 332-352 (VWEKTVGMHECKSLCKRALVR) are Cytoplasmic-facing. A helical transmembrane segment spans residues 353–373 (LPVVIPIWFLAIIFPFFGPIN). Topologically, residues 374 to 376 (STV) are extracellular. A helical membrane pass occupies residues 377–397 (GSLLVSFTVYIIPALAHIFTF). Residues 398 to 420 (KSSSARQNAVEQPPKFVGRWVGT) are Cytoplasmic-facing. Residues 421–441 (FVINVFIVVWVLIVGFGFGGW) traverse the membrane as a helical segment. Residues 442–490 (ASMVNFVHQIDTFGLFTKCYQCPPPTPSVPTMPPHQMNATAPSPHHHHH) are Extracellular-facing. The N-linked (GlcNAc...) asparagine glycan is linked to Asn-479.

Belongs to the amino acid/polyamine transporter 2 family. Amino acid/auxin permease (AAAP) (TC 2.A.18.1) subfamily. Shoots and roots of nodulating plants, at low levels.

The protein localises to the cell membrane. Functionally, carrier protein involved in proton-driven auxin influx. Mediates the formation of auxin gradient from developing leaves (site of auxin biosynthesis) to tips by contributing to the loading of auxin in vascular tissues and facilitating acropetal (base to tip) auxin transport within inner tissues of the root apex, and basipetal (tip to base) auxin transport within outer tissues of the root apex. May be involved in lateral roots and nodules formation. The protein is Auxin transporter-like protein 5 (LAX5) of Medicago truncatula (Barrel medic).